The chain runs to 384 residues: Chaperone protein DnaJ (384 aa).

The region spanning 5–70 (DFYQVLGVSK…QKRQMYDQYG (66 aa)) is the J domain. The CR-type zinc finger occupies 138–216 (GKTVELEIPT…CHGHGRKEET (79 aa)). 8 residues coordinate Zn(2+): cysteine 151, cysteine 154, cysteine 168, cysteine 171, cysteine 190, cysteine 193, cysteine 204, and cysteine 207. 4 CXXCXGXG motif repeats span residues 151-158 (CRDCNGSG), 168-175 (CGHCHGSG), 190-197 (CPQCRGTG), and 204-211 (CRTCHGHG).

This sequence belongs to the DnaJ family. In terms of assembly, homodimer. Requires Zn(2+) as cofactor.

The protein localises to the cytoplasm. Participates actively in the response to hyperosmotic and heat shock by preventing the aggregation of stress-denatured proteins and by disaggregating proteins, also in an autonomous, DnaK-independent fashion. Unfolded proteins bind initially to DnaJ; upon interaction with the DnaJ-bound protein, DnaK hydrolyzes its bound ATP, resulting in the formation of a stable complex. GrpE releases ADP from DnaK; ATP binding to DnaK triggers the release of the substrate protein, thus completing the reaction cycle. Several rounds of ATP-dependent interactions between DnaJ, DnaK and GrpE are required for fully efficient folding. Also involved, together with DnaK and GrpE, in the DNA replication of plasmids through activation of initiation proteins. This is Chaperone protein DnaJ from Idiomarina loihiensis (strain ATCC BAA-735 / DSM 15497 / L2-TR).